The sequence spans 467 residues: tRNA dimethylallyltransferase (467 aa).

Residues 1 to 47 (MASVAAARAVPVGSGLRGLQRTLPLVVILGATGTGKSTLALQLGQRL) constitute a mitochondrion transit peptide. Position 32–37 (32–37 (TGTGKS)) interacts with dimethylallyl diphosphate. Interaction with substrate tRNA stretches follow at residues 55–58 (DSMQ) and 183–187 (RKVAR). The segment at 221–230 (FSNPCILWLH) is core aggregation region. An interaction with isopentenylpyrophosphate transferase region spans residues 233–255 (QAVLDERLDKRVDDMLAAGLLEE). 2 interaction with substrate tRNA regions span residues 281-283 (QSI) and 313-331 (ALKQ…WVKN). The segment at 395–425 (HLCDLCDRIIIGDREWAAHIKSKSHLNQLKK) adopts a Matrin-type zinc-finger fold. The interval 429 to 467 (LDSDAVNTIESQSVSPDHNKEPKEKGSPGQNDQELKCSV) is disordered. Positions 433 to 444 (AVNTIESQSVSP) are enriched in polar residues. Residue S443 is modified to Phosphoserine. A compositionally biased stretch (basic and acidic residues) spans 445 to 454 (DHNKEPKEKG). A Phosphoserine modification is found at S455.

The protein belongs to the IPP transferase family.

The protein localises to the mitochondrion. It is found in the cytoplasm. It carries out the reaction adenosine(37) in tRNA + dimethylallyl diphosphate = N(6)-dimethylallyladenosine(37) in tRNA + diphosphate. Its function is as follows. Catalyzes the transfer of a dimethylallyl group onto the adenine at position 37 of both cytosolic and mitochondrial tRNAs, leading to the formation of N6-(dimethylallyl)adenosine (i6A37). Mediates modification of a limited subset of tRNAs: tRNA(Ser)(AGA), tRNA(Ser)(CGA), tRNA(Ser)(UGA), as well as partial modification of the selenocysteine tRNA(Ser)(UCA). TRIT1 is therefore required for selenoprotein expression. This Homo sapiens (Human) protein is tRNA dimethylallyltransferase (TRIT1).